Reading from the N-terminus, the 173-residue chain is Bifunctional protein PyrR (173 aa).

A PRPP-binding motif is present at residues Val93–Thr105.

The protein belongs to the purine/pyrimidine phosphoribosyltransferase family. PyrR subfamily. Homodimer and homohexamer; in equilibrium.

The catalysed reaction is UMP + diphosphate = 5-phospho-alpha-D-ribose 1-diphosphate + uracil. Regulates transcriptional attenuation of the pyrimidine nucleotide (pyr) operon by binding in a uridine-dependent manner to specific sites on pyr mRNA. This disrupts an antiterminator hairpin in the RNA and favors formation of a downstream transcription terminator, leading to a reduced expression of downstream genes. Functionally, also displays a weak uracil phosphoribosyltransferase activity which is not physiologically significant. The sequence is that of Bifunctional protein PyrR from Streptococcus pneumoniae (strain 70585).